A 757-amino-acid chain; its full sequence is Cellulose synthase-like protein B1 (757 aa).

Transmembrane regions (helical) follow at residues 18-38 (TNYF…SLLL) and 50-70 (VWLV…LITC). Aspartate 136 is a catalytic residue. Residues 186 to 216 (EFNRDWEKTKREYEKLRRKVEDATGDSHMLD) are a coiled coil. Aspartate 462 is an active-site residue. 6 consecutive transmembrane segments (helical) span residues 533–553 (LAYL…YCLL), 569–589 (LYLG…LWEF), 615–635 (LFSI…VFII), 674–694 (FLPG…FSVG), 710–730 (AEAC…MGLF), and 737–757 (TPLS…VFSV).

It belongs to the glycosyltransferase 2 family. Plant cellulose synthase-like B subfamily. As to expression, expressed in young seedlings, primarily in the vascular tissue.

Its subcellular location is the golgi apparatus membrane. Thought to be a Golgi-localized beta-glycan synthase that polymerize the backbones of noncellulosic polysaccharides (hemicelluloses) of plant cell wall. This Arabidopsis thaliana (Mouse-ear cress) protein is Cellulose synthase-like protein B1 (CSLB1).